A 171-amino-acid polypeptide reads, in one-letter code: Peptide deformylase 1 (171 aa).

Fe cation is bound by residues Cys-99 and His-141. Glu-142 is an active-site residue.

This sequence belongs to the polypeptide deformylase family. Requires Fe(2+) as cofactor.

It carries out the reaction N-terminal N-formyl-L-methionyl-[peptide] + H2O = N-terminal L-methionyl-[peptide] + formate. In terms of biological role, removes the formyl group from the N-terminal Met of newly synthesized proteins. Requires at least a dipeptide for an efficient rate of reaction. N-terminal L-methionine is a prerequisite for activity but the enzyme has broad specificity at other positions. In Xanthomonas axonopodis pv. citri (strain 306), this protein is Peptide deformylase 1.